The chain runs to 89 residues: Three-finger toxin 3 (89 aa).

An N-terminal signal peptide occupies residues methionine 1 to leucine 16. Disulfide bonds link cysteine 24–cysteine 47, cysteine 40–cysteine 66, cysteine 70–cysteine 81, and cysteine 82–cysteine 87.

The protein belongs to the three-finger toxin family. Ancestral subfamily. Expressed by the venom gland.

The protein resides in the secreted. In Sistrurus catenatus edwardsii (Desert massasauga), this protein is Three-finger toxin 3.